The sequence spans 751 residues: Dual specificity tyrosine-phosphorylation-regulated kinase 1A (751 aa).

Residues 59–68 show a composition bias toward polar residues; that stretch reads YNDQIQQPLP. 2 disordered regions span residues 59–81 and 104–129; these read YNDQ…RDPA and YAKK…KVYN. Residues 109–126 carry the Bipartite nuclear localization signal motif; it reads RRHQQGQGDDSSHKKERK. In terms of domain architecture, Protein kinase spans 151–471; the sequence is YEIDSLIGKG…PYYALQHSFF (321 aa). Residues 157 to 165, Lys-180, and 230 to 233 contribute to the ATP site; these read IGKGSFGQV and FEML. The active-site Proton acceptor is the Asp-279. Polar residues predominate over residues 477–493; sequence EGTNTSNSVSTSPAMEQ. 3 disordered regions span residues 477–532, 580–667, and 730–751; these read EGTN…HSGG, HVPS…GNQA, and GMDR…VASS. A compositionally biased stretch (low complexity) spans 494 to 517; it reads SQSSGTTSSTSSSSGGSSGTSNSG. The tract at residues 585 to 613 is histidine-rich domain (HRD); sequence QQNVPHHHGNGSHHHHHHHHHHHGQHVLS. Residues 589–609 show a composition bias toward basic residues; sequence PHHHGNGSHHHHHHHHHHHGQ. Positions 611-622 are enriched in polar residues; sequence VLSNRTRTRIYN. 2 stretches are compositionally biased toward low complexity: residues 623 to 633 and 642 to 660; these read SPSTSSSTQDS and SMTS…SSST. Positions 742 to 751 are enriched in polar residues; it reads CVQQSPVASS.

The protein belongs to the protein kinase superfamily. CMGC Ser/Thr protein kinase family. MNB/DYRK subfamily. Autophosphorylated on tyrosine residues.

The protein localises to the nucleus. The protein resides in the nucleus speckle. It carries out the reaction L-seryl-[protein] + ATP = O-phospho-L-seryl-[protein] + ADP + H(+). It catalyses the reaction L-threonyl-[protein] + ATP = O-phospho-L-threonyl-[protein] + ADP + H(+). The enzyme catalyses L-tyrosyl-[protein] + ATP = O-phospho-L-tyrosyl-[protein] + ADP + H(+). The catalysed reaction is [DNA-directed RNA polymerase] + ATP = phospho-[DNA-directed RNA polymerase] + ADP + H(+). Dual-specificity kinase which possesses both serine/threonine and tyrosine kinase activities. Exhibits a substrate preference for proline at position P+1 and arginine at position P-3. Plays an important role in double-strand breaks (DSBs) repair following DNA damage. Mechanistically, phosphorylates RNF169 and increases its ability to block accumulation of TP53BP1 at the DSB sites thereby promoting homologous recombination repair (HRR). Also acts as a positive regulator of transcription by acting as a CTD kinase that mediates phosphorylation of the CTD (C-terminal domain) of the large subunit of RNA polymerase II (RNAP II) POLR2A. Modulates alternative splicing by phosphorylating the splice factor SRSF6. Phosphorylates SEPTIN4, SEPTIN5 and SF3B1. The polypeptide is Dual specificity tyrosine-phosphorylation-regulated kinase 1A (Xenopus tropicalis (Western clawed frog)).